The sequence spans 832 residues: FAST kinase domain-containing protein 1, mitochondrial (832 aa).

Positions 765-825 (VAIEFLDSKA…KDAWIDYLRK (61 aa)) constitute an RAP domain.

This sequence belongs to the FAST kinase family.

It is found in the mitochondrion. Functionally, may regulate the stability of some mitochondrial mRNA species. The protein is FAST kinase domain-containing protein 1, mitochondrial (fastkd1) of Xenopus tropicalis (Western clawed frog).